A 901-amino-acid chain; its full sequence is MSILTRIFGSRNERVLRKLKKQVVKINKMEPAFEALSDDELKAKTQEFRDRLSGGETLQQILPEAFATVREASKRVLGMRHFDVQLIGGMVLTNRCIAEMRTGEGKTLTATLPCYLIALEGKGVHVVTVNDYLARRDAETNRPLFEFLGMSVGVNIPGLSPEEKRAAYAADITYATNSELGFDYLRDNLAHSKEERFQRTLGYALVDEVDSILIDEARTPLIISGQAENSSELYIAVNKLIPSLIKQEKEDTEEYQGEGDFTLDLKSKQAHLTERGQEKVEDWLIAQGLMPEGDSLYSPSRIVLLHHVMAALRAHTLFEKDVDYIVKDGEIVIVDEHTGRTMAGRRWSDGLHQAIEAKEGVDVKSENQTVASISYQNYFRLYERLAGMTGTADTEAFEFQQIYGLETVVIPTNRPMIRDDRTDVMFENEQYKFNAIIEDIKDCVERQQPVLVGTISVEKSEELSKALDKAGIKHNVLNAKFHQQEAEIVAEAGFPSAVTIATNMAGRGTDIILGGNWKAQAAKLENPTQEQIEALKAEWEKNHEIVMKAGGLHIIGTERHESRRIDNQLRGRSGRQGDPGSSRFYLSLEDGLMRIYLNEGKLNLMRKAFTVAGEAMESKMLAKVIASAQAKVEAFHFDGRKNLLEYDDVANDQRHAIYEQRNHLLDNDDISETINAIRHDVFNGVIDQYIPPQSLEEQWDIKGLEERLSQEFGMELPISNWLEEDNNLHEESLRERIVEIAEKEYKEKEALVGEDAMRHFEKGVMLQTLDELWKEHLASMDYLRQGIHLRGYAQKDPKQEYKKESFRMFTEMLDSLKHQVITALTRVRVRTQEEMEEAERARQEMAARINQNNLPVDENSQTTQNSETEDYSDRRIGRNEPCPCGSGKKYKHCHGSRVARQ.

ATP contacts are provided by residues glutamine 85, 103–107 (GEGKT), and aspartate 510. Residues 848 to 901 (RINQNNLPVDENSQTTQNSETEDYSDRRIGRNEPCPCGSGKKYKHCHGSRVARQ) form a disordered region. Over residues 849 to 866 (INQNNLPVDENSQTTQNS) the composition is skewed to polar residues. Positions 882, 884, 893, and 894 each coordinate Zn(2+). A compositionally biased stretch (basic residues) spans 888 to 901 (KKYKHCHGSRVARQ).

The protein belongs to the SecA family. As to quaternary structure, monomer and homodimer. Part of the essential Sec protein translocation apparatus which comprises SecA, SecYEG and auxiliary proteins SecDF-YajC and YidC. Forms a complex with SecB. The cofactor is Zn(2+).

Its subcellular location is the cell inner membrane. It is found in the cytoplasm. The enzyme catalyses ATP + H2O + cellular proteinSide 1 = ADP + phosphate + cellular proteinSide 2.. Functionally, part of the Sec protein translocase complex. Interacts with the SecYEG preprotein conducting channel. Has a central role in coupling the hydrolysis of ATP to the transfer of proteins into and across the cell membrane, serving both as a receptor for the preprotein-SecB complex and as an ATP-driven molecular motor driving the stepwise translocation of polypeptide chains across the membrane. This chain is Protein translocase subunit SecA, found in Haemophilus influenzae (strain ATCC 51907 / DSM 11121 / KW20 / Rd).